Here is a 151-residue protein sequence, read N- to C-terminus: 3-dehydroquinate dehydratase (151 aa).

Residue Tyr24 is the Proton acceptor of the active site. Residues Asn76, His82, and Asp89 each coordinate substrate. Residue His102 is the Proton donor of the active site. Residues 103–104 (LS) and Arg113 each bind substrate.

Belongs to the type-II 3-dehydroquinase family. In terms of assembly, homododecamer.

It catalyses the reaction 3-dehydroquinate = 3-dehydroshikimate + H2O. It participates in metabolic intermediate biosynthesis; chorismate biosynthesis; chorismate from D-erythrose 4-phosphate and phosphoenolpyruvate: step 3/7. Catalyzes a trans-dehydration via an enolate intermediate. In Acinetobacter baumannii (strain AB307-0294), this protein is 3-dehydroquinate dehydratase.